Here is a 1189-residue protein sequence, read N- to C-terminus: Nucleolar protein NET1 (1189 aa).

Phosphoserine occurs at positions 60 and 166. 2 disordered regions span residues serine 160–glycine 260 and threonine 345–lysine 1189. The segment covering serine 166–serine 180 has biased composition (low complexity). The segment covering isoleucine 200 to valine 210 has biased composition (polar residues). Residues serine 231 and serine 252 each carry the phosphoserine modification. A compositionally biased stretch (pro residues) spans leucine 244–proline 253. The span at proline 368–glutamate 381 shows a compositional bias: basic and acidic residues. Over residues proline 391–glycine 407 the composition is skewed to low complexity. Polar residues predominate over residues alanine 432–lysine 450. Serine 437, serine 439, serine 447, and serine 452 each carry phosphoserine. A compositionally biased stretch (polar residues) spans alanine 470–lysine 486. Position 497 is a phosphoserine (serine 497). Over residues asparagine 526 to isoleucine 543 the composition is skewed to basic and acidic residues. A compositionally biased stretch (acidic residues) spans isoleucine 590–aspartate 601. A compositionally biased stretch (polar residues) spans serine 641 to leucine 657. The span at lysine 659–proline 668 shows a compositional bias: basic and acidic residues. Threonine 676 is modified (phosphothreonine). Positions lysine 682–alanine 691 are enriched in low complexity. Over residues lysine 692–glutamate 702 the composition is skewed to basic and acidic residues. Positions threonine 710–aspartate 725 are enriched in acidic residues. Basic and acidic residues predominate over residues lysine 756 to lysine 777. The segment covering lysine 778–serine 792 has biased composition (polar residues). Positions lysine 806–threonine 815 are enriched in basic and acidic residues. The segment covering serine 822 to valine 833 has biased composition (low complexity). Residue serine 830 is modified to Phosphoserine. 3 stretches are compositionally biased toward basic and acidic residues: residues aspartate 884 to lysine 897, alanine 905 to serine 919, and alanine 945 to alanine 954. Residues serine 969–serine 999 are compositionally biased toward low complexity. A compositionally biased stretch (polar residues) spans arginine 1023–isoleucine 1039. Phosphothreonine is present on threonine 1042. The segment covering serine 1055–serine 1070 has biased composition (low complexity). Phosphoserine is present on residues serine 1056 and serine 1059. Residues proline 1095–glutamine 1109 show a composition bias toward basic and acidic residues. Low complexity-rich tracts occupy residues aspartate 1123 to serine 1137 and serine 1158 to leucine 1169.

This sequence to yeast YKR010c. Component of the RENT complex which is composed of at least NET1, CDC14 and SIR2. Interacts with NSI1. Phosphorylated by CDC5.

It is found in the nucleus. The protein resides in the nucleolus. Functionally, has a role in chromosome maintenance and is involved in mitotic exit. Inhibits the action of CDC14 by sequestering it in the nucleolus. Also binds to RNA polymerase I and stimulates rRNA synthesis. Influences RDNA chromatin by tethering SIR2 to rDNA in the nucleolus. This Saccharomyces cerevisiae (strain ATCC 204508 / S288c) (Baker's yeast) protein is Nucleolar protein NET1 (NET1).